The following is a 505-amino-acid chain: Alpha-1-syntrophin (505 aa).

Disordered stretches follow at residues 1-25 (MASG…GAGG) and 40-77 (LTVS…PPQL). 2 consecutive PH domains span residues 6–269 (RAPR…AQVN) and 293–401 (DIKQ…DGCH). The PDZ domain occupies 87-170 (RVTVRKADAG…EVVLEVKYMK (84 aa)). A phosphoserine mark is found at S101, S184, S189, S193, and S200. The tract at residues 180 to 210 (TGGTSVGWDSPPASPLQRQPSSPGPTPRNFS) is disordered. One can recognise an SU domain in the interval 449 to 505 (PFEKLQMSSDDGASLLFLDFGGAEGEIQLDLHSCPKTIVFIIHSFLSAKVTRLGLLA). The segment at 483–505 (PKTIVFIIHSFLSAKVTRLGLLA) is calmodulin-binding.

The protein belongs to the syntrophin family. In terms of assembly, monomer and homodimer. Interacts with the other members of the syntrophin family SNTB1 and SNTB2; SGCG and SGCA of the dystrophin glycoprotein complex; NOS1; GRB2; the sodium channel proteins SCN4A and SCN5A; F-actin and calmodulin. Interacts with dystrophin protein DMD and related proteins DTNA and UTRN and with MAPK12, TGFA and GA. Interacts with MYOC; regulates muscle hypertrophy. Interacts with DTNB. Phosphorylated by CaM-kinase II. Phosphorylation may inhibit the interaction with DMD. In terms of tissue distribution, high expression in skeletal muscle and heart. Low expression in brain, pancreas, liver, kidney and lung. Not detected in placenta.

Its subcellular location is the cell membrane. It localises to the sarcolemma. The protein resides in the cell junction. It is found in the cytoplasm. The protein localises to the cytoskeleton. Adapter protein that binds to and probably organizes the subcellular localization of a variety of membrane proteins. May link various receptors to the actin cytoskeleton and the extracellular matrix via the dystrophin glycoprotein complex. Plays an important role in synapse formation and in the organization of UTRN and acetylcholine receptors at the neuromuscular synapse. Binds to phosphatidylinositol 4,5-bisphosphate. The chain is Alpha-1-syntrophin (SNTA1) from Homo sapiens (Human).